The sequence spans 542 residues: Polysialoglycoprotein (542 aa).

A signal peptide spans methionine 1–valine 21. The propeptide occupies serine 22–glycine 120. The disordered stretch occupies residues glutamate 70 to isoleucine 542. A compositionally biased stretch (polar residues) spans valine 78–leucine 95. The segment covering serine 97–serine 106 has biased composition (basic and acidic residues). Positions aspartate 107–threonine 116 are enriched in low complexity. 32 consecutive repeat copies span residues aspartate 121 to glycine 133, aspartate 134 to glycine 146, aspartate 147 to glycine 159, aspartate 160 to glycine 172, aspartate 173 to glycine 185, aspartate 186 to glycine 198, aspartate 199 to glycine 211, aspartate 212 to glycine 224, aspartate 225 to glycine 237, aspartate 238 to glycine 250, aspartate 251 to glycine 263, aspartate 264 to glycine 276, aspartate 277 to glycine 289, aspartate 290 to glycine 302, aspartate 303 to glycine 315, aspartate 316 to glycine 328, aspartate 329 to glycine 341, aspartate 342 to glycine 354, aspartate 355 to glycine 367, aspartate 368 to glycine 380, aspartate 381 to glycine 393, aspartate 394 to glycine 406, aspartate 407 to glycine 419, aspartate 420 to glycine 432, aspartate 433 to glycine 445, aspartate 446 to glycine 458, aspartate 459 to glycine 471, aspartate 472 to glycine 484, aspartate 485 to glycine 497, aspartate 498 to glycine 510, aspartate 511 to glycine 523, and aspartate 524 to glycine 536. The interval aspartate 121–glycine 536 is 32 X 13 AA tandem repeats of D-D-A-T-S-E-A-A-T-G-P-S-G. An O-linked (GalNAc...) threonine glycan is attached at threonine 124. Residue serine 125 is glycosylated (O-linked (GalNAc...) serine). 2 O-linked (GalNAc...) threonine glycosylation sites follow: threonine 129 and threonine 137. The O-linked (GalNAc...) serine glycan is linked to serine 138. O-linked (GalNAc...) threonine glycans are attached at residues threonine 142 and threonine 150. A glycan (O-linked (GalNAc...) serine) is linked at serine 151. Threonine 155 and threonine 163 each carry an O-linked (GalNAc...) threonine glycan. Serine 164 is a glycosylation site (O-linked (GalNAc...) serine). O-linked (GalNAc...) threonine glycosylation is found at threonine 168 and threonine 176. A glycan (O-linked (GalNAc...) serine) is linked at serine 177. Residues threonine 181 and threonine 189 are each glycosylated (O-linked (GalNAc...) threonine). An O-linked (GalNAc...) serine glycan is attached at serine 190. O-linked (GalNAc...) threonine glycans are attached at residues threonine 194 and threonine 202. Serine 203 carries an O-linked (GalNAc...) serine glycan. Residues threonine 207 and threonine 215 are each glycosylated (O-linked (GalNAc...) threonine). An O-linked (GalNAc...) serine glycan is attached at serine 216. O-linked (GalNAc...) threonine glycosylation is found at threonine 220 and threonine 228. Residue serine 229 is glycosylated (O-linked (GalNAc...) serine). O-linked (GalNAc...) threonine glycosylation is found at threonine 233 and threonine 241. Serine 242 carries an O-linked (GalNAc...) serine glycan. Residues threonine 246 and threonine 254 are each glycosylated (O-linked (GalNAc...) threonine). O-linked (GalNAc...) serine glycosylation occurs at serine 255. O-linked (GalNAc...) threonine glycans are attached at residues threonine 259 and threonine 267. The O-linked (GalNAc...) serine glycan is linked to serine 268. 2 O-linked (GalNAc...) threonine glycosylation sites follow: threonine 272 and threonine 280. The O-linked (GalNAc...) serine glycan is linked to serine 281. O-linked (GalNAc...) threonine glycosylation is found at threonine 285 and threonine 293. The O-linked (GalNAc...) serine glycan is linked to serine 294. Threonine 298 and threonine 306 each carry an O-linked (GalNAc...) threonine glycan. O-linked (GalNAc...) serine glycosylation is present at serine 307. O-linked (GalNAc...) threonine glycosylation is found at threonine 311 and threonine 319. O-linked (GalNAc...) serine glycosylation is present at serine 320. Threonine 324 and threonine 332 each carry an O-linked (GalNAc...) threonine glycan. Serine 333 carries O-linked (GalNAc...) serine glycosylation. O-linked (GalNAc...) threonine glycans are attached at residues threonine 337 and threonine 345. Serine 346 carries an O-linked (GalNAc...) serine glycan. O-linked (GalNAc...) threonine glycans are attached at residues threonine 350 and threonine 358. O-linked (GalNAc...) serine glycosylation is present at serine 359. Residues threonine 363 and threonine 371 are each glycosylated (O-linked (GalNAc...) threonine). O-linked (GalNAc...) serine glycosylation occurs at serine 372. Threonine 376 and threonine 384 each carry an O-linked (GalNAc...) threonine glycan. O-linked (GalNAc...) serine glycosylation occurs at serine 385. 2 O-linked (GalNAc...) threonine glycosylation sites follow: threonine 389 and threonine 397. A glycan (O-linked (GalNAc...) serine) is linked at serine 398. 2 O-linked (GalNAc...) threonine glycosylation sites follow: threonine 402 and threonine 410. Serine 411 carries O-linked (GalNAc...) serine glycosylation. O-linked (GalNAc...) threonine glycans are attached at residues threonine 415 and threonine 423. O-linked (GalNAc...) serine glycosylation is present at serine 424. O-linked (GalNAc...) threonine glycans are attached at residues threonine 428 and threonine 436. Serine 437 carries O-linked (GalNAc...) serine glycosylation. O-linked (GalNAc...) threonine glycosylation is found at threonine 441 and threonine 449. The O-linked (GalNAc...) serine glycan is linked to serine 450. Residues threonine 454 and threonine 462 are each glycosylated (O-linked (GalNAc...) threonine). An O-linked (GalNAc...) serine glycan is attached at serine 463. O-linked (GalNAc...) threonine glycosylation is found at threonine 467 and threonine 475. An O-linked (GalNAc...) serine glycan is attached at serine 476. Residues threonine 480 and threonine 488 are each glycosylated (O-linked (GalNAc...) threonine). An O-linked (GalNAc...) serine glycan is attached at serine 489. Residues threonine 493 and threonine 501 are each glycosylated (O-linked (GalNAc...) threonine). A glycan (O-linked (GalNAc...) serine) is linked at serine 502. Threonine 506 and threonine 514 each carry an O-linked (GalNAc...) threonine glycan. Residue serine 515 is glycosylated (O-linked (GalNAc...) serine). Threonine 519 and threonine 527 each carry an O-linked (GalNAc...) threonine glycan. Serine 528 is a glycosylation site (O-linked (GalNAc...) serine). Threonine 532 is a glycosylation site (O-linked (GalNAc...) threonine). Positions aspartate 537–isoleucine 542 are excised as a propeptide.

Most sialic acid residues exist in the form of polysialyl groups partly capped with deaminoneuraminic acid. Cortical alveoli of immature ovaries.

In terms of biological role, in response to egg activation, PSGP is discharged by exocytosis into the perivitelline space, where it undergoes rapid proteolysis into glycotridecapeptides. During fertilization and/or early development the glycotridecapeptides prevent polyspermy or are involved in the formation of a fertilization membrane. The protein is Polysialoglycoprotein of Oncorhynchus mykiss (Rainbow trout).